The chain runs to 393 residues: Double-stranded RNA-binding protein 5 (393 aa).

2 consecutive DRBM domains span residues 1–70 and 87–155; these read MYKN…VLSS and IYKN…SLKK. Disordered regions lie at residues 220-251 and 335-371; these read ASSSSSTSTPNQHKNSSFISLIPPPPPPKSSK and NPNLNPSSLSSSVNEFTSSNNSCSVLNTPGLGGQEKK. Residues 347–361 are compositionally biased toward polar residues; the sequence is VNEFTSSNNSCSVLN.

Heterodimer with DRB1, DRB2 or DRB4. Interacts with DCL1 and DCL3. In terms of tissue distribution, expressed in the shoot apical meristem (SAM).

Functionally, binds double-stranded RNA. May be involved in RNA-mediated silencing. In Arabidopsis thaliana (Mouse-ear cress), this protein is Double-stranded RNA-binding protein 5 (DRB5).